The primary structure comprises 957 residues: Glycine dehydrogenase (decarboxylating) (957 aa).

Lysine 708 is modified (N6-(pyridoxal phosphate)lysine).

This sequence belongs to the GcvP family. As to quaternary structure, the glycine cleavage system is composed of four proteins: P, T, L and H. Pyridoxal 5'-phosphate serves as cofactor.

It catalyses the reaction N(6)-[(R)-lipoyl]-L-lysyl-[glycine-cleavage complex H protein] + glycine + H(+) = N(6)-[(R)-S(8)-aminomethyldihydrolipoyl]-L-lysyl-[glycine-cleavage complex H protein] + CO2. Functionally, the glycine cleavage system catalyzes the degradation of glycine. The P protein binds the alpha-amino group of glycine through its pyridoxal phosphate cofactor; CO(2) is released and the remaining methylamine moiety is then transferred to the lipoamide cofactor of the H protein. The polypeptide is Glycine dehydrogenase (decarboxylating) (Salmonella typhimurium (strain LT2 / SGSC1412 / ATCC 700720)).